We begin with the raw amino-acid sequence, 240 residues long: Enolase-phosphatase E1 (240 aa).

It belongs to the HAD-like hydrolase superfamily. MasA/MtnC family. Monomer. Requires Mg(2+) as cofactor.

The catalysed reaction is 5-methylsulfanyl-2,3-dioxopentyl phosphate + H2O = 1,2-dihydroxy-5-(methylsulfanyl)pent-1-en-3-one + phosphate. Its pathway is amino-acid biosynthesis; L-methionine biosynthesis via salvage pathway; L-methionine from S-methyl-5-thio-alpha-D-ribose 1-phosphate: step 3/6. The protein operates within amino-acid biosynthesis; L-methionine biosynthesis via salvage pathway; L-methionine from S-methyl-5-thio-alpha-D-ribose 1-phosphate: step 4/6. In terms of biological role, bifunctional enzyme that catalyzes the enolization of 2,3-diketo-5-methylthiopentyl-1-phosphate (DK-MTP-1-P) into the intermediate 2-hydroxy-3-keto-5-methylthiopentenyl-1-phosphate (HK-MTPenyl-1-P), which is then dephosphorylated to form the acireductone 1,2-dihydroxy-3-keto-5-methylthiopentene (DHK-MTPene). This Saccharopolyspora erythraea (strain ATCC 11635 / DSM 40517 / JCM 4748 / NBRC 13426 / NCIMB 8594 / NRRL 2338) protein is Enolase-phosphatase E1.